We begin with the raw amino-acid sequence, 334 residues long: D-fructose 1,6-bisphosphatase class 2/sedoheptulose 1,7-bisphosphatase (334 aa).

Positions 33, 57, 85, and 88 each coordinate Mn(2+). Substrate-binding positions include 88–90 (EGT), Tyr-119, 164–166 (RAR), and 186–188 (DGD). Glu-213 provides a ligand contact to Mn(2+).

It belongs to the FBPase class 2 family. Homotetramer. Mn(2+) serves as cofactor.

The catalysed reaction is beta-D-fructose 1,6-bisphosphate + H2O = beta-D-fructose 6-phosphate + phosphate. The enzyme catalyses D-sedoheptulose 1,7-bisphosphate + H2O = D-sedoheptulose 7-phosphate + phosphate. It functions in the pathway carbohydrate biosynthesis; Calvin cycle. In terms of biological role, catalyzes the hydrolysis of fructose 1,6-bisphosphate (Fru 1,6-P2) and sedoheptulose 1,7-bisphosphate (Sed 1,7-P2) to fructose 6-phosphate and sedoheptulose 7-phosphate, respectively. This Prochlorococcus marinus (strain NATL1A) protein is D-fructose 1,6-bisphosphatase class 2/sedoheptulose 1,7-bisphosphatase.